A 341-amino-acid polypeptide reads, in one-letter code: Allergen Mag (341 aa).

This is Allergen Mag (MAG) from Dermatophagoides farinae (American house dust mite).